Reading from the N-terminus, the 46-residue chain is Defensin Tk-AMP-D6.1 (46 aa).

Cystine bridges form between Cys-3-Cys-46, Cys-14-Cys-34, Cys-20-Cys-40, and Cys-24-Cys-42.

Its function is as follows. Plant defense peptide. In Triticum kiharae (Wheat), this protein is Defensin Tk-AMP-D6.1.